Reading from the N-terminus, the 31-residue chain is Cytochrome b6-f complex subunit 6 (31 aa).

The helical transmembrane segment at 4 to 26 (ITSYFGFLLAASTITSALLIGLS) threads the bilayer.

The protein belongs to the PetL family. The 4 large subunits of the cytochrome b6-f complex are cytochrome b6, subunit IV (17 kDa polypeptide, PetD), cytochrome f and the Rieske protein, while the 4 small subunits are PetG, PetL, PetM and PetN. The complex functions as a dimer.

It localises to the plastid. It is found in the chloroplast thylakoid membrane. Component of the cytochrome b6-f complex, which mediates electron transfer between photosystem II (PSII) and photosystem I (PSI), cyclic electron flow around PSI, and state transitions. PetL is important for photoautotrophic growth as well as for electron transfer efficiency and stability of the cytochrome b6-f complex. This chain is Cytochrome b6-f complex subunit 6, found in Chloranthus spicatus (Chulantree).